A 572-amino-acid polypeptide reads, in one-letter code: Cell cycle protein kinase DBF2 (572 aa).

Phosphoserine is present on residues serine 17, serine 20, and serine 74. The region spanning 177–477 (FEMITQVGQG…FEHVKRMSYF (301 aa)) is the Protein kinase domain. ATP-binding positions include 183–191 (VGQGGYGQV) and lysine 206. The active-site Proton acceptor is aspartate 300. Position 374 is a phosphoserine; by CDC15 (serine 374). Residues 478–555 (ADINFSTLRS…RHRNGKQGSS (78 aa)) form the AGC-kinase C-terminal domain. Residue threonine 544 is modified to Phosphothreonine; by CDC15.

The protein belongs to the protein kinase superfamily. Ser/Thr protein kinase family. As to quaternary structure, interacts with MOB1. MOB1-binding is required for a late mitotic event. Post-translationally, phosphorylation of Ser-374 and Thr-544 by CDC15 is essential for activation of DBF2 kinase activity.

The protein resides in the cytoplasm. The protein localises to the cytoskeleton. Its subcellular location is the microtubule organizing center. It is found in the spindle pole body. It localises to the bud neck. The protein resides in the nucleus. The catalysed reaction is L-seryl-[protein] + ATP = O-phospho-L-seryl-[protein] + ADP + H(+). The enzyme catalyses L-threonyl-[protein] + ATP = O-phospho-L-threonyl-[protein] + ADP + H(+). Kinase activity is regulated by BUB2, CDC15 and CDC5, and is maximal during nuclear division. CDK1 kinase inhibits cellular DBF2-MOB1 kinase activity via phosphorylation of both CDC15 and MOB1. Its function is as follows. Ser/Thr-protein kinase involved in the mitotic exit network (MEN) and required after the metaphase to anaphase cell cycle transition. Phosphorylates CHS2 to regulate its dynamics and chitin synthesis at the division site during cytokinesis. Coordinates septin and actomyosin ring (AMR) functions during cytokinesis through the phosphorylation of HOF1. In complex with MOB1, phosphorylates CDC14 at sites adjacent to its nuclear localization sequence, thereby retaining CDC14 in the cytoplasm. Also binds to SWI5 and CLB2 mRNAs cotranscriptionally to regulate their decay. In the nucleus, the DBF2-MOB1 complex regulates passenger protein localization during anaphase. Mediates sorbic acid stress tolerance through promoting vacuolar H(+)-ATPase function, probably through phosphorylation of VMA1 and VMA2 subunits. The sequence is that of Cell cycle protein kinase DBF2 (DBF2) from Saccharomyces cerevisiae (strain ATCC 204508 / S288c) (Baker's yeast).